The following is a 143-amino-acid chain: uncharacterized protein (143 aa).

This sequence belongs to the SufE family.

This is an uncharacterized protein from Mycobacterium tuberculosis (strain CDC 1551 / Oshkosh).